The primary structure comprises 105 residues: Endogenous retrovirus group K member 104 Rec protein (105 aa).

A disordered region spans residues 1–43; that stretch reads MNPSEMQRKAPPRRRRHCNRAPLTHKMNKMVTSEEEMKLPSTK. Residues 10–19 show a composition bias toward basic residues; that stretch reads APPRRRRHCN. Positions 13 to 20 match the Nuclear localization signal motif; that stretch reads RRRRHCNR. The short motif at 50–59 is the Nuclear export signal element; sequence WAQLKKLTQL.

As to quaternary structure, forms homodimers, homotrimers, and homotetramers via a C-terminal domain. Associates with XPO1 and with ZNF145.

The protein localises to the cytoplasm. The protein resides in the nucleus. Its subcellular location is the nucleolus. In terms of biological role, retroviral replication requires the nuclear export and translation of unspliced, singly-spliced and multiply-spliced derivatives of the initial genomic transcript. Rec interacts with a highly structured RNA element (RcRE) present in the viral 3'LTR and recruits the cellular nuclear export machinery. This permits export to the cytoplasm of unspliced genomic or incompletely spliced subgenomic viral transcripts. This chain is Endogenous retrovirus group K member 104 Rec protein (HERV-K104), found in Homo sapiens (Human).